The sequence spans 563 residues: MTVLLLVVLQMWKATAGHSIAVSQDDGADDWETDPDFVNDVSEKEQRWGAKTVKGSGHQEHINIHQLRENVFQEHQTIKEKELETGPKASHGYGGKFGVEQDRMDKSAVGHEYQSKLSKHCSQVDSVKGFGGKFGVQTDRVDQSAVGFEYQGKTEKHASQKDYSSGFGGKYGVQADRVDKSAVGFDYQGKTEKHESQKDYSKGFGGKYGVDKDKVDKSAVGFEYQGKTEKHESQKDYVKGFGGKFGVQTDRQDKCALGWDHQEKVQLHESQKDYKSGFGGKFGVQTERQDPSAVGFDYKEKLAKHESQQDYSKGFGGKYGVQKDRMDKNAATFEDIEKPTSTYQKTKPVERVANKTSSIRANLENLAKEKEQEDRRKAEAERAQRMAREKQEQEEARRKLEEQAKAKKQTPPPSPTTQPAEPKTPSSPVYQDAVSYDAESAYKNSSTTYSAEHEPESGYKTTGSDYQEAVSQREAEYEPETVYEVAGAGDHYQAEENTYDEYENELGITAIALYDYQAAGDDEISFDPDDIITNIEMIDDGWWRGVCKGRYGLFPANYVELRQ.

Cortactin repeat units lie at residues 89-125, 126-162, 163-199, 200-236, 237-273, and 274-310; these read ASHGYGGKFGVEQDRMDKSAVGHEYQSKLSKHCSQVD, SVKGFGGKFGVQTDRVDQSAVGFEYQGKTEKHASQKD, YSSGFGGKYGVQADRVDKSAVGFDYQGKTEKHESQKD, YSKGFGGKYGVDKDKVDKSAVGFEYQGKTEKHESQKD, YVKGFGGKFGVQTDRQDKCALGWDHQEKVQLHESQKD, and YKSGFGGKFGVQTERQDPSAVGFDYKEKLAKHESQQD. The stretch at 311 to 333 is one Cortactin 7; truncated repeat; it reads YSKGFGGKYGVQKDRMDKNAATF. Residues 331–477 form a disordered region; it reads ATFEDIEKPT…EAVSQREAEY (147 aa). A coiled-coil region spans residues 349-410; sequence VERVANKTSS…EEQAKAKKQT (62 aa). Residues 366-405 show a composition bias toward basic and acidic residues; the sequence is LAKEKEQEDRRKAEAERAQRMAREKQEQEEARRKLEEQAK. One can recognise an SH3 domain in the interval 505–563; the sequence is ELGITAIALYDYQAAGDDEISFDPDDIITNIEMIDDGWWRGVCKGRYGLFPANYVELRQ.

Acetylated. Post-translationally, in normal cells, appears to be phosphorylated on serine and threonine; in cells expressing activated forms of pp60-src, they become heavily phosphorylated on tyrosine in vitro. Tyrosine phosphorylation in transformed cells may contribute to cellular growth regulation and transformation.

Its subcellular location is the cytoplasm. The protein localises to the cytoskeleton. The protein resides in the cell projection. It is found in the lamellipodium. It localises to the ruffle. Its subcellular location is the dendrite. The protein localises to the cell membrane. The protein resides in the podosome. It is found in the cell junction. It localises to the focal adhesion. Its subcellular location is the membrane. The protein localises to the clathrin-coated pit. The protein resides in the dendritic spine. It is found in the cell cortex. It localises to the endoplasmic reticulum. Functionally, contributes to the organization of the actin cytoskeleton and cell shape. Plays a role in the formation of lamellipodia and in cell migration. Plays a role in the regulation of neuron morphology, axon growth and formation of neuronal growth cones, and may play a role in the regulation of neuronal spine density. Plays a role in focal adhesion assembly and turnover. Plays a role in intracellular protein transport and endocytosis, and in modulating the levels of potassium channels present at the cell membrane. Plays a role in endocytosis via clathrin-coated pits. This is Src substrate protein p85 (CTTN1) from Gallus gallus (Chicken).